We begin with the raw amino-acid sequence, 255 residues long: Urease accessory protein UreD 1 (255 aa).

This sequence belongs to the UreD family. UreD, UreF and UreG form a complex that acts as a GTP-hydrolysis-dependent molecular chaperone, activating the urease apoprotein by helping to assemble the nickel containing metallocenter of UreC. The UreE protein probably delivers the nickel.

Its subcellular location is the cytoplasm. Functionally, required for maturation of urease via the functional incorporation of the urease nickel metallocenter. The sequence is that of Urease accessory protein UreD 1 from Saccharopolyspora erythraea (strain ATCC 11635 / DSM 40517 / JCM 4748 / NBRC 13426 / NCIMB 8594 / NRRL 2338).